The chain runs to 332 residues: MTHLHAGLNPETIEKGRLELNENPDTLHQDIQQVRDMIITRPDIGFLRTDDAFILRFLRARKFNQMEAFRLLAQYFQYRQLNLDMFKNLKADDPGIKRALMDGFPGVLENRDHYGRKILLLFAANWDQSRNSFVDILRAILLSLEVLIEDQELQINGFILIIDWSNFSFKQASKLTPSILRLAIEGLQDSFPARFGGVHFVNQPWYIHALYTIIKPFLKDKTRKRIFLHGNNLNSLHQLIHPDCLPSEFGGTLPPYDMGTWARTLLGPDYNDENEYTHSSYNVIHVKHVPAIVEGEDSPKYMKRSHSVVEPGTLRHEEERENENTQPLLALD.

Residues 96-257 (IKRALMDGFP…EFGGTLPPYD (162 aa)) form the CRAL-TRIO domain. The disordered stretch occupies residues 300 to 332 (KYMKRSHSVVEPGTLRHEEERENENTQPLLALD). Over residues 313–323 (TLRHEEERENE) the composition is skewed to basic and acidic residues.

Its subcellular location is the golgi apparatus. The protein resides in the trans-Golgi network membrane. The protein localises to the early endosome membrane. It is found in the cytoplasmic vesicle. It localises to the clathrin-coated vesicle. In terms of biological role, required for normal morphology of late endosomes and/or lysosomes in neurons. Binds phosphatidylinositol 3,5-bisphosphate (PtdIns(3,5)P2). In Xenopus laevis (African clawed frog), this protein is Clavesin-1 (clvs1).